A 130-amino-acid chain; its full sequence is Capsid protein (130 aa).

The segment at 32–105 is viral RNA-binding; it reads EWISSNSRSQ…FATNDDCALI (74 aa).

The protein belongs to the Leviviricetes capsid protein family. Homodimer. The capsid proteins form dimers that assemble by group of 5. Twelve such pentamers are linked together with free dimers. The homodimers binds to the viral RNA via an operator hairpin, but also to many other RNA sequences in the viral genome; this interaction probably shifts the virus from the replicative to the assembly phase and ensures specific encapsidation of the viral genome.

The protein resides in the virion. In terms of biological role, capsid protein self-assembles to form an icosahedral capsid with a T=3 symmetry, about 26 nm in diameter, and consisting of 89 capsid proteins dimers (178 capsid proteins). Involved in viral genome encapsidation through the interaction between a capsid protein dimer and the multiple packaging signals present in the RNA genome. The capsid also contains 1 copy of the A2 maturation protein. Functionally, acts as a translational repressor of viral replicase synthesis late in infection. This latter function is the result of capsid protein interaction with an RNA hairpin which contains the replicase ribosome-binding site. The chain is Capsid protein from Enterobacteria phage fr (Bacteriophage fr).